Reading from the N-terminus, the 478-residue chain is MLO-like protein 13 (478 aa).

Residues 1-10 are Extracellular-facing; that stretch reads MAEARSGSLE. Residues 11 to 31 form a helical membrane-spanning segment; the sequence is YTPTWVVAFICFIIVLLSLLA. Over 32–60 the chain is Cytoplasmic; it reads ERGLHHLGKCLKRRQQDALFEALQKLKEE. Residues 61 to 81 form a helical membrane-spanning segment; sequence LMLLGFISLMLTVSQAAIRHI. Residues 82–145 are Extracellular-facing; it reads CVPPALVNNM…VSVEALHQLH (64 aa). The chain crosses the membrane as a helical span at residues 146–166; the sequence is IFIFVLAVFHVIFCASTMVLG. Over 167 to 276 the chain is Cytoplasmic; that stretch reads GARIQQWKHW…LRTLEIDFKK (110 aa). Helical transmembrane passes span 277–297 and 298–318; these read VVSI…LNVG and GWNT…MVGA. The Cytoplasmic portion of the chain corresponds to 319-360; the sequence is KLEYIISSLALDVSEKRSRAEEAVITPSDELFWFHRPGIVLQ. The chain crosses the membrane as a helical span at residues 361–381; that stretch reads LIHFILFQNSFEIAFFFWILF. Topologically, residues 382 to 400 are extracellular; sequence TYGIHSCIMEKLGYLIPRL. A helical transmembrane segment spans residues 401–421; the sequence is VMGVLVQVLCSYSTLPLYALV. The Cytoplasmic portion of the chain corresponds to 422–478; that stretch reads TQMGSKFKKGIFDNVVQSTLEGWLEDTRNRGESTSEAHRIEMQPTTPESYNVQSENP. Residues 435-456 form a calmodulin-binding region; that stretch reads NVVQSTLEGWLEDTRNRGESTS. Residues 449-462 are compositionally biased toward basic and acidic residues; it reads RNRGESTSEAHRIE. The segment at 449–478 is disordered; it reads RNRGESTSEAHRIEMQPTTPESYNVQSENP. Over residues 464–478 the composition is skewed to polar residues; sequence QPTTPESYNVQSENP.

The protein belongs to the MLO family.

It localises to the membrane. In terms of biological role, may be involved in modulation of pathogen defense and leaf cell death. Activity seems to be regulated by Ca(2+)-dependent calmodulin binding and seems not to require heterotrimeric G proteins. The chain is MLO-like protein 13 (MLO13) from Arabidopsis thaliana (Mouse-ear cress).